Reading from the N-terminus, the 277-residue chain is Adenylate kinase (277 aa).

Residue 72 to 77 participates in ATP binding; it reads GAGKGT. The segment at 92–121 is NMP; it reads ATGDMLRSQVAKQTALGVQAKKIMDQGGLV. AMP-binding positions include Thr93, Arg98, 119 to 121, 148 to 151, and Gln155; these read GLV and GFPR. Positions 189–226 are LID; it reads GRLVHPASGRSYHKLFNPPKVAMTDDVTGDPLVQRSDD. Residues Arg190 and 199 to 200 contribute to the ATP site; that span reads SY. Positions 223 and 234 each coordinate AMP. ATP is bound at residue Gln262.

This sequence belongs to the adenylate kinase family. AK2 subfamily. In terms of assembly, monomer.

The protein localises to the cytoplasm. The protein resides in the cytosol. It localises to the mitochondrion intermembrane space. The catalysed reaction is AMP + ATP = 2 ADP. Its function is as follows. Catalyzes the reversible transfer of the terminal phosphate group between ATP and AMP. Plays an important role in cellular energy homeostasis and in adenine nucleotide metabolism. Adenylate kinase activity is critical for regulation of the phosphate utilization and the AMP de novo biosynthesis pathways. This Eremothecium gossypii (strain ATCC 10895 / CBS 109.51 / FGSC 9923 / NRRL Y-1056) (Yeast) protein is Adenylate kinase.